Here is a 51-residue protein sequence, read N- to C-terminus: Large ribosomal subunit protein bL33 (51 aa).

This sequence belongs to the bacterial ribosomal protein bL33 family.

This Nitrosospira multiformis (strain ATCC 25196 / NCIMB 11849 / C 71) protein is Large ribosomal subunit protein bL33.